A 466-amino-acid polypeptide reads, in one-letter code: MQDVIFFDQRPRPDRDQTPRERRYYVWTVGCQMNISDSERLEAALQGVGYSPATRPEDASFIVLNSCSVRASAEERILGKLGELVRVKRQHPDTRIVLWGCMVGPNNRSIFADQLPMVDHFVSPSAVDEVVALAPNPIYTLDEPALPVRDWSHPPVSVHVPIQYGCNMTCSYCVIPLRRGRERSRPLAEIVEEVRRIVARGAKEITLLGQIVDSWGHDLPGRPELADLLEAVDPTPGLLRLRFLTSHPAWMTDRLIETVARLPRCQPEINLPVQAGSDRVLKLMRRGYTVARYKTLIARIRAAIPDISLTTDIIVGHPGETEDDFRQTMDLCAEIGFDKVHIAAFSARPGTRAAEQEQDPALAVPPAVKEERRRRLEQLQEQIATERMARFLGQTVEVLVEGESKGKWRGRTPGNRLVFFSHPADLTGQLVPVKITATSPWSLQGVPQLDDSVNAQSKENGLVKAR.

Residues Arg-22–Tyr-139 form the MTTase N-terminal domain. [4Fe-4S] cluster is bound by residues Cys-31, Cys-67, Cys-101, Cys-166, Cys-170, and Cys-173. A Radical SAM core domain is found at Ser-152 to Glu-386. The TRAM domain maps to Ala-389–Leu-449.

The protein belongs to the methylthiotransferase family. MiaB subfamily. In terms of assembly, monomer. It depends on [4Fe-4S] cluster as a cofactor.

It localises to the cytoplasm. It catalyses the reaction N(6)-dimethylallyladenosine(37) in tRNA + (sulfur carrier)-SH + AH2 + 2 S-adenosyl-L-methionine = 2-methylsulfanyl-N(6)-dimethylallyladenosine(37) in tRNA + (sulfur carrier)-H + 5'-deoxyadenosine + L-methionine + A + S-adenosyl-L-homocysteine + 2 H(+). In terms of biological role, catalyzes the methylthiolation of N6-(dimethylallyl)adenosine (i(6)A), leading to the formation of 2-methylthio-N6-(dimethylallyl)adenosine (ms(2)i(6)A) at position 37 in tRNAs that read codons beginning with uridine. The chain is tRNA-2-methylthio-N(6)-dimethylallyladenosine synthase from Chloroflexus aurantiacus (strain ATCC 29366 / DSM 635 / J-10-fl).